Here is a 429-residue protein sequence, read N- to C-terminus: GTPase Obg (429 aa).

The Obg domain maps to 1–158 (MFVDQVKIYV…RNVQLELKVL (158 aa)). The segment at 124 to 145 (RGNKRFATPANPAPELSENGEP) is disordered. Positions 159–329 (ADVGLVGFPS…LLLAIADKLE (171 aa)) constitute an OBG-type G domain. Residues 165-172 (GFPSVGKS), 190-194 (FTTIV), 212-215 (DLPG), 282-285 (NKMD), and 310-312 (SAV) contribute to the GTP site. 2 residues coordinate Mg(2+): S172 and T192. Positions 351-429 (KYVADEPDFE…LLDYEFEFMD (79 aa)) constitute an OCT domain.

The protein belongs to the TRAFAC class OBG-HflX-like GTPase superfamily. OBG GTPase family. Monomer. The cofactor is Mg(2+).

It localises to the cytoplasm. Its function is as follows. An essential GTPase which binds GTP, GDP and possibly (p)ppGpp with moderate affinity, with high nucleotide exchange rates and a fairly low GTP hydrolysis rate. Plays a role in control of the cell cycle, stress response, ribosome biogenesis and in those bacteria that undergo differentiation, in morphogenesis control. This Listeria monocytogenes serotype 4a (strain HCC23) protein is GTPase Obg.